A 371-amino-acid polypeptide reads, in one-letter code: Cytochrome b (371 aa).

4 consecutive transmembrane segments (helical) span residues 25-45 (FGSM…FLAI), 69-90 (WIMQ…YIHI), 105-125 (WLSG…GYVL), and 170-190 (FFAL…IHIM). Residues histidine 75 and histidine 89 each contribute to the heme b site. Residues histidine 174 and histidine 188 each coordinate heme b. Position 193 (histidine 193) interacts with a ubiquinone. The next 4 membrane-spanning stretches (helical) occupy residues 218-238 (HKDI…MSFS), 280-300 (LGGT…PFTH), 312-332 (IMQL…WAAT), and 339-358 (FTII…IMNP).

Belongs to the cytochrome b family. In terms of assembly, the cytochrome bc1 complex contains 3 respiratory subunits (MT-CYB, CYC1 and UQCRFS1), 2 core proteins (UQCRC1 and UQCRC2) and probably 6 low-molecular weight proteins. Requires heme b as cofactor.

The protein localises to the mitochondrion inner membrane. Its function is as follows. Component of the ubiquinol-cytochrome c reductase complex (complex III or cytochrome b-c1 complex) that is part of the mitochondrial respiratory chain. The b-c1 complex mediates electron transfer from ubiquinol to cytochrome c. Contributes to the generation of a proton gradient across the mitochondrial membrane that is then used for ATP synthesis. This Coluber constrictor (Eastern racer) protein is Cytochrome b (MT-CYB).